The following is a 160-amino-acid chain: Large ribosomal subunit protein bL17 (160 aa).

Basic and acidic residues predominate over residues 123–141 (DEKRQKRAEARAKRREEMQ). Positions 123–160 (DEKRQKRAEARAKRREEMQKAMAEQQQAEGGEPEGGNE) are disordered. The span at 142 to 152 (KAMAEQQQAEG) shows a compositional bias: low complexity.

The protein belongs to the bacterial ribosomal protein bL17 family. As to quaternary structure, part of the 50S ribosomal subunit. Contacts protein L32.

This is Large ribosomal subunit protein bL17 from Acidobacterium capsulatum (strain ATCC 51196 / DSM 11244 / BCRC 80197 / JCM 7670 / NBRC 15755 / NCIMB 13165 / 161).